The sequence spans 286 residues: UDP-3-O-acyl-N-acetylglucosamine deacetylase (286 aa).

Positions 79, 237, and 241 each coordinate Zn(2+). The Proton donor role is filled by histidine 264.

It belongs to the LpxC family. Zn(2+) is required as a cofactor.

It carries out the reaction a UDP-3-O-[(3R)-3-hydroxyacyl]-N-acetyl-alpha-D-glucosamine + H2O = a UDP-3-O-[(3R)-3-hydroxyacyl]-alpha-D-glucosamine + acetate. Its pathway is glycolipid biosynthesis; lipid IV(A) biosynthesis; lipid IV(A) from (3R)-3-hydroxytetradecanoyl-[acyl-carrier-protein] and UDP-N-acetyl-alpha-D-glucosamine: step 2/6. In terms of biological role, catalyzes the hydrolysis of UDP-3-O-myristoyl-N-acetylglucosamine to form UDP-3-O-myristoylglucosamine and acetate, the committed step in lipid A biosynthesis. In Chlamydia trachomatis serovar L2 (strain ATCC VR-902B / DSM 19102 / 434/Bu), this protein is UDP-3-O-acyl-N-acetylglucosamine deacetylase.